A 232-amino-acid polypeptide reads, in one-letter code: MKIAIIQFGGTNCDMDVLHVLKDVVGVDAETVWYKEESLTGFDGVVVPGGFSYGDYLRAGAIAARTPIMDSIKKIASEGKPVLGICNGFQILTEARLLEGALTTNEYPKFRCHWTNLRVETANTPFTSKFRKGEVIKLPIAHMEGKFYAEEATLAELDENEQVVFRYVDEKGRLTDKANPNGSLENIAGIVNSSRNVLGLMPHPERASESILGSDEGRKVFESMADYITENF.

Residues Lys2–Phe232 form the Glutamine amidotransferase type-1 domain. The active-site Nucleophile is Cys86. Residues His203 and Glu205 contribute to the active site.

Part of the FGAM synthase complex composed of 1 PurL, 1 PurQ and 2 PurS subunits.

It localises to the cytoplasm. The catalysed reaction is N(2)-formyl-N(1)-(5-phospho-beta-D-ribosyl)glycinamide + L-glutamine + ATP + H2O = 2-formamido-N(1)-(5-O-phospho-beta-D-ribosyl)acetamidine + L-glutamate + ADP + phosphate + H(+). It catalyses the reaction L-glutamine + H2O = L-glutamate + NH4(+). It functions in the pathway purine metabolism; IMP biosynthesis via de novo pathway; 5-amino-1-(5-phospho-D-ribosyl)imidazole from N(2)-formyl-N(1)-(5-phospho-D-ribosyl)glycinamide: step 1/2. Its function is as follows. Part of the phosphoribosylformylglycinamidine synthase complex involved in the purines biosynthetic pathway. Catalyzes the ATP-dependent conversion of formylglycinamide ribonucleotide (FGAR) and glutamine to yield formylglycinamidine ribonucleotide (FGAM) and glutamate. The FGAM synthase complex is composed of three subunits. PurQ produces an ammonia molecule by converting glutamine to glutamate. PurL transfers the ammonia molecule to FGAR to form FGAM in an ATP-dependent manner. PurS interacts with PurQ and PurL and is thought to assist in the transfer of the ammonia molecule from PurQ to PurL. The sequence is that of Phosphoribosylformylglycinamidine synthase subunit PurQ from Methanosarcina mazei (strain ATCC BAA-159 / DSM 3647 / Goe1 / Go1 / JCM 11833 / OCM 88) (Methanosarcina frisia).